A 213-amino-acid chain; its full sequence is Nucleoside triphosphate pyrophosphatase (213 aa).

Residue Asp-77 is the Proton acceptor of the active site.

The protein belongs to the Maf family. A divalent metal cation is required as a cofactor.

The protein resides in the cytoplasm. The catalysed reaction is a ribonucleoside 5'-triphosphate + H2O = a ribonucleoside 5'-phosphate + diphosphate + H(+). The enzyme catalyses a 2'-deoxyribonucleoside 5'-triphosphate + H2O = a 2'-deoxyribonucleoside 5'-phosphate + diphosphate + H(+). Functionally, nucleoside triphosphate pyrophosphatase. May have a dual role in cell division arrest and in preventing the incorporation of modified nucleotides into cellular nucleic acids. The chain is Nucleoside triphosphate pyrophosphatase from Cutibacterium acnes (strain DSM 16379 / KPA171202) (Propionibacterium acnes).